The following is a 673-amino-acid chain: Polyunsaturated fatty acid 5-lipoxygenase (673 aa).

One can recognise a PLAT domain in the interval 2–117 (PSYTVTVATG…EIVLRDGRAK (116 aa)). Glycine 17, threonine 18, aspartate 19, asparagine 44, aspartate 45, glutamate 47, aspartate 79, and aspartate 80 together coordinate Ca(2+). A Lipoxygenase domain is found at 118-673 (LARDDQIHIL…PDRIPNSVAI (556 aa)). Serine 271 carries the phosphoserine modification. 2 residues coordinate Fe cation: histidine 367 and histidine 372. Serine 523 is subject to Phosphoserine. The Fe cation site is built by histidine 550, asparagine 554, and isoleucine 673.

The protein belongs to the lipoxygenase family. In terms of assembly, homodimer. Interacts with ALOX5AP and LTC4S. Interacts with COTL1, the interaction is required for stability and efficient catalytic activity. Interacts with PIK3R1; this interaction bridges ALOX5 with CD40 after CD40 ligation in B cells and leads to the production of reactive oxygen species (ROS). Interacts (via PLAT domain) with DICER1 (via Dicer dsRNA-binding fold domain); this interaction enhances arachidonate 5-lipoxygenase activity and modifies the miRNA precursor processing activity of DICER1. Fe cation is required as a cofactor. In terms of processing, serine phosphorylation by MAPKAPK2 is stimulated by arachidonic acid. Phosphorylation on Ser-523 by PKA has an inhibitory effect. Phosphorylation on Ser-271 prevents export from the nucleus. Phosphorylation at Ser-523 is stimulated by 8-bromo-3',5'-cyclic AMP or prostaglandin E2.

Its subcellular location is the cytoplasm. The protein resides in the nucleus matrix. The protein localises to the nucleus membrane. It is found in the perinuclear region. It localises to the cytosol. Its subcellular location is the nucleus envelope. The protein resides in the nucleus intermembrane space. The enzyme catalyses (5Z,8Z,11Z,14Z)-eicosatetraenoate + O2 = leukotriene A4 + H2O. The catalysed reaction is 18-HEPE + O2 = (5S)-hydroperoxy-18-hydroxy-(7E,9E,11Z,14Z,16E)-eicosapentaenoate. It carries out the reaction (18R)-hydroxy-(5Z,8Z,11Z,14Z,16E)-eicosapentaenoate + O2 = (5S)-hydroperoxy-(18R)-hydroxy-(6E,8Z,11Z,14Z,16E)-eicosapentaenoate. It catalyses the reaction (18S)-hydroxy-(5Z,8Z,11Z,14Z,16E)-eicosapentaenoate + O2 = (5S)-hydroperoxy-(18S)-hydroxy-(6E,8Z,11Z,14Z,16E)-eicosapentaenoate. The enzyme catalyses (5S)-hydroperoxy-(18S)-hydroxy-(6E,8Z,11Z,14Z,16E)-eicosapentaenoate = (5S,6S)-epoxy-(18S)-hydroxy-(7E,9E,11Z,14Z,16E)-eicosapentaenoate + H2O. The catalysed reaction is (5S)-hydroperoxy-(18R)-hydroxy-(6E,8Z,11Z,14Z,16E)-eicosapentaenoate = (5S,6S)-epoxy-(18R)-hydroxy-(7E,9E,11Z,14Z,16E)-eicosapentaenoate + H2O. It carries out the reaction (5S)-hydroperoxy-18-hydroxy-(7E,9E,11Z,14Z,16E)-eicosapentaenoate = (5S,6S)-epoxy-18-hydroxy-(7E,9E,11Z,14Z,16E)-eicosapentaenoate + H2O. It catalyses the reaction (5Z,8Z,11Z,14Z)-eicosatetraenoate + O2 = (5S)-hydroperoxy-(6E,8Z,11Z,14Z)-eicosatetraenoate. The enzyme catalyses (15S)-hydroxy-(5Z,8Z,11Z,13E)-eicosatetraenoate + O2 = (5S)-hydroperoxy-(15S)-hydroxy-(6E,8Z,11Z,13E)-eicosatetraenoate. The catalysed reaction is (5S)-hydroperoxy-(6E,8Z,11Z,14Z)-eicosatetraenoate = leukotriene A4 + H2O. It carries out the reaction (5Z,8Z,11Z,14Z)-eicosatetraenoate + O2 = (8S)-hydroperoxy-(5Z,9E,11Z,14Z)-eicosatetraenoate. It catalyses the reaction (5Z,8Z,11Z,14Z)-eicosatetraenoate + O2 = (12S)-hydroperoxy-(5Z,8Z,10E,14Z)-eicosatetraenoate. The enzyme catalyses (5Z,8Z)-eicosadienoate + O2 = (5S)-hydroperoxy-(6E,8Z)-eicosadienoate. The catalysed reaction is (12S)-hydroxy-(5Z,8Z,10E,14Z)-eicosatetraenoate + O2 = (5S)-hydroperoxy-(12S)-hydroxy-(6E,8Z,10E,14Z)-eicosatetraenoate. It carries out the reaction (5Z,8Z,11Z,14Z,17Z)-eicosapentaenoate + O2 = 5-hydroperoxy-(6E,8Z,11Z,14Z,17Z)-eicosapentaenoate. It catalyses the reaction (4Z,7Z,10Z,13Z,16Z,19Z)-docosahexaenoate + O2 = (14S)-hydroperoxy-(4Z,7Z,10Z,12E,16Z,19Z)-docosahexaenoate. The enzyme catalyses (4Z,7Z,10Z,13Z,16Z,19Z)-docosahexaenoate + O2 = (7S)-hydroperoxy-(4Z,8E,10Z,13Z,16Z,19Z)-docosahexaenoate. The catalysed reaction is (4Z,7Z,10Z,13Z,16Z,19Z)-docosahexaenoate + O2 = (17S)-hydroperoxy-(4Z,7Z,10Z,13Z,15E,19Z)-docosahexaenoate. The protein operates within lipid metabolism; leukotriene A4 biosynthesis. In terms of biological role, catalyzes the oxygenation of arachidonate to 5-hydroperoxyeicosatetraenoate (5-HPETE) followed by the dehydration to 5,6- epoxyeicosatetraenoate (Leukotriene A4/LTA4), the first two steps in the biosynthesis of leukotrienes, which are potent mediators of inflammation. Also catalyzes the oxygenation of arachidonate into 8-hydroperoxyicosatetraenoate (8-HPETE) and 12-hydroperoxyicosatetraenoate (12-HPETE). Displays lipoxin synthase activity being able to convert (15S)-HETE into a conjugate tetraene. Although arachidonate is the preferred substrate, this enzyme can also metabolize oxidized fatty acids derived from arachidonate such as (15S)-HETE, eicosapentaenoate (EPA) such as (18R)- and (18S)-HEPE or docosahexaenoate (DHA) which lead to the formation of specialized pro-resolving mediators (SPM) lipoxin and resolvins E and D respectively, therefore it participates in anti-inflammatory responses. Oxidation of DHA directly inhibits endothelial cell proliferation and sprouting angiogenesis via peroxisome proliferator-activated receptor gamma (PPARgamma). It does not catalyze the oxygenation of linoleic acid and does not convert (5S)-HETE to lipoxin isomers. In addition to inflammatory processes, it participates in dendritic cell migration, wound healing through an antioxidant mechanism based on heme oxygenase-1 (HO-1) regulation expression, monocyte adhesion to the endothelium via ITGAM expression on monocytes. Moreover, it helps establish an adaptive humoral immunity by regulating primary resting B cells and follicular helper T cells and participates in the CD40-induced production of reactive oxygen species (ROS) after CD40 ligation in B cells through interaction with PIK3R1 that bridges ALOX5 with CD40. May also play a role in glucose homeostasis, regulation of insulin secretion and palmitic acid-induced insulin resistance via AMPK. Can regulate bone mineralization and fat cell differentiation increases in induced pluripotent stem cells. The polypeptide is Polyunsaturated fatty acid 5-lipoxygenase (Mesocricetus auratus (Golden hamster)).